The following is a 308-amino-acid chain: Methionyl-tRNA formyltransferase (308 aa).

109–112 is a (6S)-5,6,7,8-tetrahydrofolate binding site; the sequence is SLLP.

Belongs to the Fmt family.

The enzyme catalyses L-methionyl-tRNA(fMet) + (6R)-10-formyltetrahydrofolate = N-formyl-L-methionyl-tRNA(fMet) + (6S)-5,6,7,8-tetrahydrofolate + H(+). Its function is as follows. Attaches a formyl group to the free amino group of methionyl-tRNA(fMet). The formyl group appears to play a dual role in the initiator identity of N-formylmethionyl-tRNA by promoting its recognition by IF2 and preventing the misappropriation of this tRNA by the elongation apparatus. This chain is Methionyl-tRNA formyltransferase, found in Methylococcus capsulatus (strain ATCC 33009 / NCIMB 11132 / Bath).